The following is a 372-amino-acid chain: Putative glutamate--cysteine ligase 2 (372 aa).

This sequence belongs to the glutamate--cysteine ligase type 2 family. YbdK subfamily.

The enzyme catalyses L-cysteine + L-glutamate + ATP = gamma-L-glutamyl-L-cysteine + ADP + phosphate + H(+). Its function is as follows. ATP-dependent carboxylate-amine ligase which exhibits weak glutamate--cysteine ligase activity. The polypeptide is Putative glutamate--cysteine ligase 2 (Cupriavidus metallidurans (strain ATCC 43123 / DSM 2839 / NBRC 102507 / CH34) (Ralstonia metallidurans)).